Reading from the N-terminus, the 40-residue chain is Dermonecrotic toxin LgSicTox-alphaI-1 (40 aa).

The Mg(2+) site is built by Glu-32 and Asp-34.

The protein belongs to the arthropod phospholipase D family. Class II subfamily. Mg(2+) is required as a cofactor. In terms of processing, contains 2 disulfide bonds. In terms of tissue distribution, expressed by the venom gland.

The protein localises to the secreted. The enzyme catalyses an N-(acyl)-sphingosylphosphocholine = an N-(acyl)-sphingosyl-1,3-cyclic phosphate + choline. It catalyses the reaction an N-(acyl)-sphingosylphosphoethanolamine = an N-(acyl)-sphingosyl-1,3-cyclic phosphate + ethanolamine. The catalysed reaction is a 1-acyl-sn-glycero-3-phosphocholine = a 1-acyl-sn-glycero-2,3-cyclic phosphate + choline. It carries out the reaction a 1-acyl-sn-glycero-3-phosphoethanolamine = a 1-acyl-sn-glycero-2,3-cyclic phosphate + ethanolamine. Dermonecrotic toxins cleave the phosphodiester linkage between the phosphate and headgroup of certain phospholipids (sphingolipid and lysolipid substrates), forming an alcohol (often choline) and a cyclic phosphate. This toxin acts on sphingomyelin (SM). It may also act on ceramide phosphoethanolamine (CPE), lysophosphatidylcholine (LPC) and lysophosphatidylethanolamine (LPE), but not on lysophosphatidylserine (LPS), and lysophosphatidylglycerol (LPG). It acts by transphosphatidylation, releasing exclusively cyclic phosphate products as second products. In vivo, intradermal injection induces dermonecrosis. Induces, hemolysis, vascular permeability, edema, inflammatory response, and platelet aggregation. This chain is Dermonecrotic toxin LgSicTox-alphaI-1, found in Loxosceles gaucho (Spider).